The primary structure comprises 137 residues: Large ribosomal subunit protein uL13 (137 aa).

It belongs to the universal ribosomal protein uL13 family. In terms of assembly, part of the 50S ribosomal subunit.

Its function is as follows. This protein is one of the early assembly proteins of the 50S ribosomal subunit, although it is not seen to bind rRNA by itself. It is important during the early stages of 50S assembly. In Methanocaldococcus jannaschii (strain ATCC 43067 / DSM 2661 / JAL-1 / JCM 10045 / NBRC 100440) (Methanococcus jannaschii), this protein is Large ribosomal subunit protein uL13.